Here is a 722-residue protein sequence, read N- to C-terminus: Metal transporter cnnm-5 (722 aa).

Residues methionine 1–glycine 17 form the signal peptide. Residues alanine 18–glutamate 139 are Extracellular-facing. 2 N-linked (GlcNAc...) asparagine glycosylation sites follow: asparagine 102 and asparagine 114. A CNNM transmembrane domain is found at alanine 132–leucine 318. The helical transmembrane segment at isoleucine 140 to tyrosine 160 threads the bilayer. At methionine 161–glutamine 196 the chain is on the cytoplasmic side. The helical transmembrane segment at leucine 197–glutamate 217 threads the bilayer. Residues lysine 218 to aspartate 227 lie on the Extracellular side of the membrane. The chain crosses the membrane as a helical span at residues valine 228–alanine 248. Topologically, residues valine 249 to asparagine 257 are cytoplasmic. The chain crosses the membrane as a helical span at residues leucine 258–tyrosine 278. The Extracellular portion of the chain corresponds to proline 279–glutamate 722. N-linked (GlcNAc...) asparagine glycans are attached at residues asparagine 320, asparagine 349, and asparagine 371. CBS domains are found at residues methionine 333–glutamate 396 and threonine 413–glutamate 473. A disordered region spans residues serine 584–threonine 607. Asparagine 639 is a glycosylation site (N-linked (GlcNAc...) asparagine). Residues leucine 686 to glutamate 722 are disordered. Positions serine 688–proline 703 are enriched in low complexity.

This sequence belongs to the ACDP family.

Its subcellular location is the cell membrane. In terms of biological role, probable metal transporter. Probably acts redundantly with the other metal transport proteins cnnm-1, cnnm-2, cnnm-3 and cnnm-4 to regulate Mg(2+) homeostasis. The polypeptide is Metal transporter cnnm-5 (Caenorhabditis elegans).